Consider the following 283-residue polypeptide: ATP phosphoribosyltransferase (283 aa).

It belongs to the ATP phosphoribosyltransferase family. Long subfamily. It depends on Mg(2+) as a cofactor.

The protein localises to the cytoplasm. The catalysed reaction is 1-(5-phospho-beta-D-ribosyl)-ATP + diphosphate = 5-phospho-alpha-D-ribose 1-diphosphate + ATP. It functions in the pathway amino-acid biosynthesis; L-histidine biosynthesis; L-histidine from 5-phospho-alpha-D-ribose 1-diphosphate: step 1/9. Its activity is regulated as follows. Feedback inhibited by histidine. Functionally, catalyzes the condensation of ATP and 5-phosphoribose 1-diphosphate to form N'-(5'-phosphoribosyl)-ATP (PR-ATP). Has a crucial role in the pathway because the rate of histidine biosynthesis seems to be controlled primarily by regulation of HisG enzymatic activity. The sequence is that of ATP phosphoribosyltransferase from Salinibacter ruber (strain DSM 13855 / M31).